We begin with the raw amino-acid sequence, 771 residues long: Probable exo-1,4-beta-xylosidase bxlB (771 aa).

Residues 1–25 (MAHITSWHYGNAIALLVSLAPGALS) form the signal peptide. An N-linked (GlcNAc...) asparagine glycan is attached at Asn-67. Asp-293 is an active-site residue. 4 N-linked (GlcNAc...) asparagine glycosylation sites follow: Asn-305, Asn-345, Asn-423, and Asn-464.

Belongs to the glycosyl hydrolase 3 family.

The protein resides in the secreted. It catalyses the reaction Hydrolysis of (1-&gt;4)-beta-D-xylans, to remove successive D-xylose residues from the non-reducing termini.. The protein operates within glycan degradation; xylan degradation. Its function is as follows. Xylan 1,4-beta-xylosidase involved in the hydrolysis of xylan, a major structural heterogeneous polysaccharide found in plant biomass representing the second most abundant polysaccharide in the biosphere, after cellulose. In Aspergillus fumigatus (strain CBS 144.89 / FGSC A1163 / CEA10) (Neosartorya fumigata), this protein is Probable exo-1,4-beta-xylosidase bxlB (bxlB).